We begin with the raw amino-acid sequence, 356 residues long: Heme A synthase (356 aa).

5 helical membrane-spanning segments follow: residues Ile-24–Val-44, Phe-106–Met-126, Leu-139–Ser-159, Ala-174–Ile-194, and Ala-214–Ile-234. His-276 is a heme binding site. The next 3 membrane-spanning stretches (helical) occupy residues Leu-278–Ser-298, Leu-309–Val-329, and Leu-331–Val-351. His-337 contributes to the heme binding site.

Belongs to the COX15/CtaA family. Type 2 subfamily. In terms of assembly, interacts with CtaB. Heme b is required as a cofactor.

It is found in the cell membrane. The enzyme catalyses Fe(II)-heme o + 2 A + H2O = Fe(II)-heme a + 2 AH2. The protein operates within porphyrin-containing compound metabolism; heme A biosynthesis; heme A from heme O: step 1/1. Functionally, catalyzes the conversion of heme O to heme A by two successive hydroxylations of the methyl group at C8. The first hydroxylation forms heme I, the second hydroxylation results in an unstable dihydroxymethyl group, which spontaneously dehydrates, resulting in the formyl group of heme A. The sequence is that of Heme A synthase from Nitrosomonas eutropha (strain DSM 101675 / C91 / Nm57).